A 993-amino-acid chain; its full sequence is DNA double-strand break repair Rad50 ATPase (993 aa).

Residues Arg12, 32–38, and Gln133 each bind ATP; that span reads NGSGKSS. Coiled coils occupy residues 192–222 and 402–493; these read LENLEKLKNEVSESEILKEEILKKYENLEKL and EELK…LEKT. The Zinc-hook domain maps to 452–556; it reads ENELKEKYED…KLNEIDSFKL (105 aa). 2 residues coordinate Zn(2+): Cys497 and Cys500. Coiled coils occupy residues 570–612, 646–677, and 702–731; these read KVEE…LEND, DSSKIENEKKSLENLKDELKNTIYNLEREINL, and ETEKSDFENKLSECKENYEKYMESLAVLKN.

It belongs to the SMC family. RAD50 subfamily. In terms of assembly, homodimer. Forms a heterotetramer composed of two Mre11 subunits and two Rad50 subunits. The cofactor is Zn(2+).

Part of the Rad50/Mre11 complex, which is involved in the early steps of DNA double-strand break (DSB) repair. The complex may facilitate opening of the processed DNA ends to aid in the recruitment of HerA and NurA. Rad50 controls the balance between DNA end bridging and DNA resection via ATP-dependent structural rearrangements of the Rad50/Mre11 complex. The chain is DNA double-strand break repair Rad50 ATPase from Methanococcus maripaludis (strain DSM 14266 / JCM 13030 / NBRC 101832 / S2 / LL).